A 335-amino-acid polypeptide reads, in one-letter code: Glyceraldehyde-3-phosphate dehydrogenase (335 aa).

NAD(+) contacts are provided by residues 13–14 (TI) and Gly-111. 140 to 142 (SCN) contributes to the D-glyceraldehyde 3-phosphate binding site. Cys-141 functions as the Nucleophile in the catalytic mechanism. Position 169 (Arg-169) interacts with NAD(+). 195–196 (HG) is a D-glyceraldehyde 3-phosphate binding site. Gln-300 serves as a coordination point for NAD(+).

This sequence belongs to the glyceraldehyde-3-phosphate dehydrogenase family. In terms of assembly, homotetramer.

It localises to the cytoplasm. It catalyses the reaction D-glyceraldehyde 3-phosphate + phosphate + NADP(+) = (2R)-3-phospho-glyceroyl phosphate + NADPH + H(+). It carries out the reaction D-glyceraldehyde 3-phosphate + phosphate + NAD(+) = (2R)-3-phospho-glyceroyl phosphate + NADH + H(+). Its pathway is carbohydrate degradation; glycolysis; pyruvate from D-glyceraldehyde 3-phosphate: step 1/5. In Methanococcoides burtonii (strain DSM 6242 / NBRC 107633 / OCM 468 / ACE-M), this protein is Glyceraldehyde-3-phosphate dehydrogenase.